The following is a 152-amino-acid chain: Xanthine-guanine phosphoribosyltransferase (152 aa).

5-phospho-alpha-D-ribose 1-diphosphate-binding positions include 37-38, Arg69, and 88-96; these read RG and DDLVDTGGT. GMP is bound at residue Arg69. Position 89 (Asp89) interacts with Mg(2+). Positions 92 and 135 each coordinate guanine. Asp92 and Ile135 together coordinate xanthine. Residues 92–96 and 134–135 contribute to the GMP site; these read DTGGT and WI.

This sequence belongs to the purine/pyrimidine phosphoribosyltransferase family. XGPT subfamily. As to quaternary structure, homotetramer. The cofactor is Mg(2+).

It localises to the cell inner membrane. It carries out the reaction GMP + diphosphate = guanine + 5-phospho-alpha-D-ribose 1-diphosphate. It catalyses the reaction XMP + diphosphate = xanthine + 5-phospho-alpha-D-ribose 1-diphosphate. The catalysed reaction is IMP + diphosphate = hypoxanthine + 5-phospho-alpha-D-ribose 1-diphosphate. The protein operates within purine metabolism; GMP biosynthesis via salvage pathway; GMP from guanine: step 1/1. It functions in the pathway purine metabolism; XMP biosynthesis via salvage pathway; XMP from xanthine: step 1/1. Functionally, purine salvage pathway enzyme that catalyzes the transfer of the ribosyl-5-phosphate group from 5-phospho-alpha-D-ribose 1-diphosphate (PRPP) to the N9 position of the 6-oxopurines guanine and xanthine to form the corresponding ribonucleotides GMP (guanosine 5'-monophosphate) and XMP (xanthosine 5'-monophosphate), with the release of PPi. To a lesser extent, also acts on hypoxanthine. The sequence is that of Xanthine-guanine phosphoribosyltransferase from Escherichia fergusonii (strain ATCC 35469 / DSM 13698 / CCUG 18766 / IAM 14443 / JCM 21226 / LMG 7866 / NBRC 102419 / NCTC 12128 / CDC 0568-73).